The primary structure comprises 143 residues: Putative pre-16S rRNA nuclease (143 aa).

It belongs to the YqgF nuclease family.

It localises to the cytoplasm. Could be a nuclease involved in processing of the 5'-end of pre-16S rRNA. The chain is Putative pre-16S rRNA nuclease from Lactococcus lactis subsp. cremoris (strain MG1363).